The primary structure comprises 359 residues: Type-1 angiotensin II receptor (359 aa).

At 1–25 (MILNSSTEDGIKRIQDDCPKAGRHN) the chain is on the extracellular side. N-linked (GlcNAc...) asparagine glycosylation occurs at N4. Residues Q15 and D17 each coordinate angiotensin II. 2 disulfide bridges follow: C18/C274 and C101/C180. A helical membrane pass occupies residues 26-55 (YIFIMIPTLYSIIFVVGIFGNSLVVIVIYF). Topologically, residues 56–61 (YMKLKT) are cytoplasmic. The chain crosses the membrane as a helical span at residues 62–89 (VASVFLLNLALADLCFLLTLPLWAVYTA). Residues 90–98 (MEYRWPFGN) are Extracellular-facing. The chain crosses the membrane as a helical span at residues 99-125 (YLCKIASASVSFNLYASVFLLTCLSID). Topologically, residues 126–141 (RYLAIVHPMKSRLRRT) are cytoplasmic. A helical membrane pass occupies residues 142–165 (MLVAKVTCIIIWLLAGLASLPTII). The Extracellular portion of the chain corresponds to 166–190 (HRNVFFIENTNITVCAFHYESQNST). Position 167 (R167) interacts with angiotensin II. The N-linked (GlcNAc...) asparagine glycan is linked to N176. Residues F182, H183, and Y184 each coordinate angiotensin II. The N-linked (GlcNAc...) asparagine glycan is linked to N188. A helical transmembrane segment spans residues 191-216 (LPVGLGLTKNILGFLFPFLIILTSYT). An angiotensin II-binding site is contributed by K199. Over 217–239 (LIWKTLKKAYEIQKNKPRKDDIF) the chain is Cytoplasmic. A helical transmembrane segment spans residues 240–268 (KIILAIVLFFFFSWVPHQIFTFMDVLIQL). At 269-278 (GLIRDCKIED) the chain is on the extracellular side. Residues 279–304 (IVDTAMPITICLAYFNNCLNPLFYGF) traverse the membrane as a helical segment. Residues 305-359 (LGKKFKKYFLQLLKYIPPKAKSHSNLSTKMSTLSYRPSENGNSSTKKPAPCIEVE) are Cytoplasmic-facing. The segment covering 336–350 (TLSYRPSENGNSSTK) has biased composition (polar residues). Residues 336 to 359 (TLSYRPSENGNSSTKKPAPCIEVE) are disordered. The S-palmitoyl cysteine moiety is linked to residue C355.

This sequence belongs to the G-protein coupled receptor 1 family. As to quaternary structure, interacts with MAS1. Interacts with ARRB1. Interacts with FLNA (via filamin repeat 21); increases PKA-mediated phosphorylation of FLNA. Post-translationally, C-terminal Ser or Thr residues may be phosphorylated. In terms of tissue distribution, adrenal medulla, cortex and kidney.

The protein localises to the cell membrane. Receptor for angiotensin II, a vasoconstricting peptide, which acts as a key regulator of blood pressure and sodium retention by the kidney. The activated receptor in turn couples to G-alpha proteins G(q) (GNAQ, GNA11, GNA14 or GNA15) and thus activates phospholipase C and increases the cytosolic Ca(2+) concentrations, which in turn triggers cellular responses such as stimulation of protein kinase C. In Bos taurus (Bovine), this protein is Type-1 angiotensin II receptor (AGTR1).